Consider the following 346-residue polypeptide: UPF0053 protein sll1254 (346 aa).

4 helical membrane-spanning segments follow: residues 1-21, 58-78, 87-107, and 121-141; these read MLEIVAAIFIVLLGSGICSCA, IGTIVVLNNIFNIVGSITIGA, AWMGVFSGILTLLIIVFGEII, and LLIAIPVRFLTLIFTPLVWLI. One can recognise a CNNM transmembrane domain in the interval 1-179; that stretch reads MLEIVAAIFI…YKEGVIEGDE (179 aa). 2 CBS domains span residues 198-259 and 263-320; these read MTPR…GYKT and LARP…IVDE.

This sequence belongs to the UPF0053 family.

It is found in the cell membrane. This chain is UPF0053 protein sll1254, found in Synechocystis sp. (strain ATCC 27184 / PCC 6803 / Kazusa).